Reading from the N-terminus, the 108-residue chain is UPF0060 membrane protein Sca_1835 (108 aa).

Helical transmembrane passes span 5–25 (ILIF…IWLW), 34–54 (FGLL…FQVF), 60–80 (VYAA…YVFD), and 84–104 (PDKY…IMLL).

It belongs to the UPF0060 family.

It is found in the cell membrane. The sequence is that of UPF0060 membrane protein Sca_1835 from Staphylococcus carnosus (strain TM300).